The sequence spans 287 residues: Acetylglutamate kinase (287 aa).

Substrate-binding positions include 70-71, R92, and N184; that span reads GG.

This sequence belongs to the acetylglutamate kinase family. ArgB subfamily.

The protein resides in the cytoplasm. The catalysed reaction is N-acetyl-L-glutamate + ATP = N-acetyl-L-glutamyl 5-phosphate + ADP. It functions in the pathway amino-acid biosynthesis; L-arginine biosynthesis; N(2)-acetyl-L-ornithine from L-glutamate: step 2/4. Catalyzes the ATP-dependent phosphorylation of N-acetyl-L-glutamate. This chain is Acetylglutamate kinase, found in Roseobacter denitrificans (strain ATCC 33942 / OCh 114) (Erythrobacter sp. (strain OCh 114)).